The following is a 61-amino-acid chain: Small ribosomal subunit protein uS14 (61 aa).

Residues Cys-24, Cys-27, Cys-40, and Cys-43 each coordinate Zn(2+).

It belongs to the universal ribosomal protein uS14 family. Zinc-binding uS14 subfamily. Part of the 30S ribosomal subunit. Contacts proteins S3 and S10. Zn(2+) is required as a cofactor.

Binds 16S rRNA, required for the assembly of 30S particles and may also be responsible for determining the conformation of the 16S rRNA at the A site. This chain is Small ribosomal subunit protein uS14, found in Streptococcus equi subsp. zooepidemicus (strain H70).